We begin with the raw amino-acid sequence, 800 residues long: DNA topoisomerase 4 subunit A (800 aa).

Positions Leu31–Glu495 constitute a Topo IIA-type catalytic domain. The active-site O-(5'-phospho-DNA)-tyrosine intermediate is Tyr119.

This sequence belongs to the type II topoisomerase GyrA/ParC subunit family. ParC type 2 subfamily. As to quaternary structure, heterotetramer composed of ParC and ParE.

It localises to the cell membrane. The enzyme catalyses ATP-dependent breakage, passage and rejoining of double-stranded DNA.. Functionally, topoisomerase IV is essential for chromosome segregation. It relaxes supercoiled DNA. Performs the decatenation events required during the replication of a circular DNA molecule. The chain is DNA topoisomerase 4 subunit A from Staphylococcus aureus.